We begin with the raw amino-acid sequence, 295 residues long: Transcriptional regulator SirC (295 aa).

The HTH araC/xylS-type domain occupies 195 to 292 (EKVYNIIISD…KITPLSFMRT (98 aa)). 2 DNA-binding regions (H-T-H motif) span residues 212 to 233 (AEVA…AAEE) and 259 to 282 (ISQV…KRHF).

In terms of biological role, positive regulator of the expression of the invasion-associated type III secretion system encoded within SPI-1 (pathogenicity island 1). This chain is Transcriptional regulator SirC (sirC), found in Salmonella typhimurium (strain SL1344).